The following is a 210-amino-acid chain: Thiamine-phosphate synthase (210 aa).

Residues 38 to 42 and asparagine 70 each bind 4-amino-2-methyl-5-(diphosphooxymethyl)pyrimidine; that span reads QFREK. Mg(2+)-binding residues include aspartate 71 and aspartate 90. Residue serine 107 participates in 4-amino-2-methyl-5-(diphosphooxymethyl)pyrimidine binding. 132-134 provides a ligand contact to 2-[(2R,5Z)-2-carboxy-4-methylthiazol-5(2H)-ylidene]ethyl phosphate; sequence TKT. Residue lysine 135 coordinates 4-amino-2-methyl-5-(diphosphooxymethyl)pyrimidine. 183-184 is a 2-[(2R,5Z)-2-carboxy-4-methylthiazol-5(2H)-ylidene]ethyl phosphate binding site; the sequence is IS.

It belongs to the thiamine-phosphate synthase family. Requires Mg(2+) as cofactor.

The enzyme catalyses 2-[(2R,5Z)-2-carboxy-4-methylthiazol-5(2H)-ylidene]ethyl phosphate + 4-amino-2-methyl-5-(diphosphooxymethyl)pyrimidine + 2 H(+) = thiamine phosphate + CO2 + diphosphate. It carries out the reaction 2-(2-carboxy-4-methylthiazol-5-yl)ethyl phosphate + 4-amino-2-methyl-5-(diphosphooxymethyl)pyrimidine + 2 H(+) = thiamine phosphate + CO2 + diphosphate. The catalysed reaction is 4-methyl-5-(2-phosphooxyethyl)-thiazole + 4-amino-2-methyl-5-(diphosphooxymethyl)pyrimidine + H(+) = thiamine phosphate + diphosphate. Its pathway is cofactor biosynthesis; thiamine diphosphate biosynthesis; thiamine phosphate from 4-amino-2-methyl-5-diphosphomethylpyrimidine and 4-methyl-5-(2-phosphoethyl)-thiazole: step 1/1. Its function is as follows. Condenses 4-methyl-5-(beta-hydroxyethyl)thiazole monophosphate (THZ-P) and 2-methyl-4-amino-5-hydroxymethyl pyrimidine pyrophosphate (HMP-PP) to form thiamine monophosphate (TMP). The protein is Thiamine-phosphate synthase of Archaeoglobus fulgidus (strain ATCC 49558 / DSM 4304 / JCM 9628 / NBRC 100126 / VC-16).